A 624-amino-acid chain; its full sequence is Forkhead box protein O1 (624 aa).

2 disordered regions span residues 1 to 62 and 94 to 128; these read MAEA…PSAS and APLS…SRRN. A Phosphothreonine; by PKB/AKT1 or PKB/AKT2 and SGK1 modification is found at Thr-24. 2 stretches are compositionally biased toward low complexity: residues 37–62 and 105–119; these read SATS…PSAS and AAAA…AGQP. The segment at residues 130-224 is a DNA-binding region (fork-head); sequence WGNLSYADLI…KSGKSPRRRA (95 aa). DNA-binding stretches follow at residues 181–188 and 204–207; these read NSIRHNLS and SSWW. Ser-182 is modified (phosphoserine; by STK4/MST1). 3 positions are modified to phosphoserine: Ser-188, Ser-204, and Ser-205. Positions 204–306 are disordered; that stretch reads SSWWMLNPEG…RLSPIMTEQD (103 aa). 2 positions are modified to N6-acetyllysine: Lys-215 and Lys-218. Ser-219 is subject to Phosphoserine; by CDK1. Omega-N-methylarginine; by PRMT1 is present on residues Arg-221 and Arg-223. Positions 221–223 match the Nuclear localization signal motif; that stretch reads RRR. Residue Ser-226 is modified to Phosphoserine; by PKB/AKT1 and SGK1. Residues Lys-232, Lys-235, and Lys-244 each carry the N6-acetyllysine modification. Positions 234-245 are enriched in basic residues; sequence AKSRGRAAKKKA. The interval 253–532 is sufficient for interaction with NLK; the sequence is GAGDSPGSQF…RLAPVKTALQ (280 aa). 2 positions are modified to phosphoserine: Ser-257 and Ser-268. Polar residues predominate over residues 279–296; sequence NWSTFRPRTSSNASTISG. Phosphoserine; by PKB/AKT1 is present on Ser-289. A Phosphoserine; by CK1 and SGK1 modification is found at Ser-292. Ser-295 carries the phosphoserine; by CK1 modification. The residue at position 299 (Ser-299) is a Phosphoserine; by DYRK1A. Phosphothreonine is present on Thr-303. Residues 333–428 form a required for interaction with RUNX2 region; it reads SEISNPENME…YGGMSQYCAP (96 aa). An N6-acetyllysine modification is found at Lys-393. Residues 431 to 435 carry the Required for interaction with SIRT1 motif; it reads LKELL.

Interacts with LRPPRC. Interacts with RUNX2; the interaction inhibits RUNX2 transcriptional activity and mediates the IGF1/insulin-dependent BGLAP expression in osteoblasts Interacts with PPP2R1A; the interaction regulates the dephosphorylation of FOXO1 at Thr-24 and Ser-263 leading to its nuclear import. Interacts with NLK. Interacts with SIRT1; the interaction results in the deacetylation of FOXO1 leading to activation of FOXO1-mediated transcription of genes involved in DNA repair and stress resistance. Binds to CDK1. Interacts with the 14-3-3 proteins, YWHAG and YWHAZ; the interactions require insulin-stimulated phosphorylation on Thr-24, promote nuclear exit and loss of transcriptional activity. Interacts with SKP2; the interaction ubiquitinates FOXO1 leading to its proteasomal degradation. The interaction requires the presence of KRIT1. Interacts (via the C-terminal half) with ATF4 (via its DNA binding domain); the interaction occurs in osteoblasts, regulates glucose homeostasis via suppression of beta-cell proliferation and subsequent decrease in insulin production. Interacts with PRMT1; the interaction methylates FOXO1, prevents PKB/AKT1 phosphorylation and retains FOXO1 in the nucleus. Interacts with EP300 and CREBBP; the interactions acetylate FOXO1. Interacts with SIRT2; the interaction is disrupted in response to oxidative stress or serum deprivation, leading to increased level of acetylated FOXO1, which promotes stress-induced autophagy by stimulating E1-like activating enzyme ATG7. Interacts (acetylated form) with ATG7; the interaction is increased in response to oxidative stress or serum deprivation and promotes the autophagic process leading to cell death. Interacts (acetylated form) with PPARG. Interacts with XBP1; this interaction is direct and leads to FOXO1 ubiquitination and degradation via the proteasome pathway. Interacts (via the Fork-head domain) with CEBPA; the interaction increases when FOXO1 is deacetylated. Interacts with WDFY2. Forms a complex with WDFY2 and AKT1. Interacts with CRY1. Interacts with PPIA/CYPA; the interaction promotes FOXO1 dephosphorylation, nuclear accumulation and transcriptional activity. Interacts with TOX4; FOXO1 is required for full induction of TOX4-dependent activity and the interaction is inhibited by insulin. Interacts (when phosphorylated on Ser-226) with STUB1/CHIP. In terms of processing, phosphorylation by NLK promotes nuclear export and inhibits the transcriptional activity. In response to growth factors, phosphorylation on Thr-24, Ser-226 and Ser-292 by PKB/AKT1 promotes nuclear export and inactivation of transactivational activity. Phosphorylation on Thr-24 is required for binding 14-3-3 proteins. Phosphorylation of Ser-226 decreases DNA-binding activity and promotes the phosphorylation of Thr-24 and Ser-289, permitting phosphorylation of Ser-292 and Ser-295, probably by CDK1, leading to nuclear exclusion and loss of function. Stress signals, such as response to oxygen or nitric oxide, attenuate the PKB/AKT1-mediated phosphorylation leading to nuclear retention. Phosphorylation of Ser-299 is independent of IGF1 and leads to reduced function. Dephosphorylated on Thr-24 and Ser-226 by PP2A in beta-cells under oxidative stress leading to nuclear retention. Phosphorylation of Ser-219 by CDK1 disrupts binding of 14-3-3 proteins leading to nuclear accumulation and has no effect on DNA binding nor transcriptional activity. Phosphorylation by STK4/MST1 on Ser-182, upon oxidative stress, inhibits binding to 14-3-3 proteins and nuclear export. PPIA/CYPA promotes its dephosphorylation on Ser-226. Ubiquitinated by SKP2. Ubiquitination leads to proteasomal degradation. Ubiquitinated by STUB1/CHIP; when Ser-226 is phosphorylated. Post-translationally, methylation inhibits AKT1-mediated phosphorylation at Ser-226 and is increased by oxidative stress. In terms of processing, acetylated. Acetylation at Lys-232 and Lys-244 are necessary for autophagic cell death induction. Deacetylated by SIRT2 in response to oxidative stress or serum deprivation, thereby negatively regulating FOXO1-mediated autophagic cell death. Once in the nucleus, acetylated by CREBBP/EP300. Acetylation diminishes the interaction with target DNA and attenuates the transcriptional activity. It increases the phosphorylation at Ser-226. Deacetylation by SIRT1 results in reactivation of the transcriptional activity. Oxidative stress by hydrogen peroxide treatment appears to promote deacetylation and uncoupling of insulin-induced phosphorylation. By contrast, resveratrol acts independently of acetylation. Acetylated at Lys-393, promoting its localization to the nucleus and transcription factor activity. Deacetylation at Lys-393 by SIRT6, promotes its translocation into the cytoplasm, preventing its transcription factor activity. Deacetylation and subsequent inhibition by SIRT6 has different effects depending on cell types: it inhibits gluconeogenesis in hepatocytes, promotes glucose sensing in pancreatic beta-cells and regulates lipid catabolism in brown adipocytes.

It localises to the cytoplasm. It is found in the nucleus. Transcription factor that is the main target of insulin signaling and regulates metabolic homeostasis in response to oxidative stress. Binds to the insulin response element (IRE) with consensus sequence 5'-TT[G/A]TTTTG-3' and the related Daf-16 family binding element (DBE) with consensus sequence 5'-TT[G/A]TTTAC-3'. Activity suppressed by insulin. Main regulator of redox balance and osteoblast numbers and controls bone mass. Orchestrates the endocrine function of the skeleton in regulating glucose metabolism. Also acts as a key regulator of chondrogenic commitment of skeletal progenitor cells in response to lipid availability: when lipids levels are low, translocates to the nucleus and promotes expression of SOX9, which induces chondrogenic commitment and suppresses fatty acid oxidation. Acts synergistically with ATF4 to suppress osteocalcin/BGLAP activity, increasing glucose levels and triggering glucose intolerance and insulin insensitivity. Also suppresses the transcriptional activity of RUNX2, an upstream activator of osteocalcin/BGLAP. Acts as an inhibitor of glucose sensing in pancreatic beta cells by acting as a transcription repressor and suppressing expression of PDX1. In hepatocytes, promotes gluconeogenesis by acting together with PPARGC1A and CEBPA to activate the expression of genes such as IGFBP1, G6PC1 and PCK1. Also promotes gluconeogenesis by directly promoting expression of PPARGC1A and G6PC1. Important regulator of cell death acting downstream of CDK1, PKB/AKT1 and STK4/MST1. Promotes neural cell death. Mediates insulin action on adipose tissue. Regulates the expression of adipogenic genes such as PPARG during preadipocyte differentiation and, adipocyte size and adipose tissue-specific gene expression in response to excessive calorie intake. Regulates the transcriptional activity of GADD45A and repair of nitric oxide-damaged DNA in beta-cells. Required for the autophagic cell death induction in response to starvation or oxidative stress in a transcription-independent manner. Mediates the function of MLIP in cardiomyocytes hypertrophy and cardiac remodeling. Positive regulator of apoptosis in cardiac smooth muscle cells as a result of its transcriptional activation of pro-apoptotic genes. Regulates endothelial cell (EC) viability and apoptosis in a PPIA/CYPA-dependent manner via transcription of CCL2 and BCL2L11 which are involved in EC chemotaxis and apoptosis. The polypeptide is Forkhead box protein O1 (FOXO1) (Bos taurus (Bovine)).